The chain runs to 500 residues: Aspartyl/glutamyl-tRNA(Asn/Gln) amidotransferase subunit B (500 aa).

This sequence belongs to the GatB/GatE family. GatB subfamily. As to quaternary structure, heterotrimer of A, B and C subunits.

The catalysed reaction is L-glutamyl-tRNA(Gln) + L-glutamine + ATP + H2O = L-glutaminyl-tRNA(Gln) + L-glutamate + ADP + phosphate + H(+). It catalyses the reaction L-aspartyl-tRNA(Asn) + L-glutamine + ATP + H2O = L-asparaginyl-tRNA(Asn) + L-glutamate + ADP + phosphate + 2 H(+). Its function is as follows. Allows the formation of correctly charged Asn-tRNA(Asn) or Gln-tRNA(Gln) through the transamidation of misacylated Asp-tRNA(Asn) or Glu-tRNA(Gln) in organisms which lack either or both of asparaginyl-tRNA or glutaminyl-tRNA synthetases. The reaction takes place in the presence of glutamine and ATP through an activated phospho-Asp-tRNA(Asn) or phospho-Glu-tRNA(Gln). This chain is Aspartyl/glutamyl-tRNA(Asn/Gln) amidotransferase subunit B, found in Clavibacter sepedonicus (Clavibacter michiganensis subsp. sepedonicus).